Here is a 738-residue protein sequence, read N- to C-terminus: Ethylene receptor (738 aa).

A run of 3 helical transmembrane segments spans residues 23–43, 54–74, and 89–109; these read ISDFFIALAYFSIPLELIYFV, VLVQFGAFIVLCGATHLINLW, and IAKVLTAVVSCATALMLVHII. Residues Cys-65 and His-69 each coordinate Cu cation. A GAF domain is found at 158-307; the sequence is DRHTILRTTL…VVADQVAVAL (150 aa). Residues 350 to 589 form the Histidine kinase domain; the sequence is VMNHEMRTPM…IFIVKLGIPE (240 aa). Residue His-353 is modified to Phosphohistidine; by autocatalysis. In terms of domain architecture, Response regulatory spans 615–730; the sequence is KVLLMDDNGV…KMRSVLSDLL (116 aa). At Asp-663 the chain carries 4-aspartylphosphate.

It belongs to the ethylene receptor family. As to quaternary structure, homodimer; disulfide-linked. Requires Cu cation as cofactor. Activation probably requires a transfer of a phosphate group between a His in the transmitter domain and an Asp of the receiver domain. Higher expression in arils than in seeds.

The protein localises to the endoplasmic reticulum membrane. It catalyses the reaction ATP + protein L-histidine = ADP + protein N-phospho-L-histidine.. Its function is as follows. May act early in the ethylene signal transduction pathway, possibly as an ethylene receptor, or as a regulator of the pathway. This Passiflora edulis (Passion fruit) protein is Ethylene receptor (ETR1).